Consider the following 812-residue polypeptide: Probable phosphoketolase (812 aa).

This sequence belongs to the XFP family. Thiamine diphosphate is required as a cofactor.

This Thermosynechococcus vestitus (strain NIES-2133 / IAM M-273 / BP-1) protein is Probable phosphoketolase.